Reading from the N-terminus, the 527-residue chain is Benzoate--CoA ligase (527 aa).

Belongs to the ATP-dependent AMP-binding enzyme family. Benzoate-CoA ligase subfamily. Monomer.

It catalyses the reaction benzoate + ATP + CoA = benzoyl-CoA + AMP + diphosphate. Functionally, catalyzes the ligation of benzoate and CoA to form benzoyl-CoA at the expense of ATP. The enzyme also ligates 2-aminobenzoate and CoA. The enzyme shows activity toward a number of benzoate derivatives. The protein is Benzoate--CoA ligase (bclA) of Thauera aromatica.